The following is a 436-amino-acid chain: MSLTNQNSKSKAAFERALPLMPGGVNSPVRAYKSVGMTPIFAERAQGSRLYDIDGKEYIDYVLSWGPMILGHADPIVTAAIQEQATRGWSYGTPTEIESAMAEVVISRVPSVEVVRMVNSGTEATMAALRLARGYTGKTKILKFEGCYHGHGDSLLIKAGSGVATLGLPDSPGVPAQIASMTLTVPYNDMDAVRIAFEKHGDDIAGVIVEPAAGNMGFVPPQPGFLEGLREITEQHGTLLIFDEVMTGFRVGFNCAQGHFGVTPDITCLGKVIGGGMPVGAYGGRRDIMEQIAPQGPIYQAGTLSGNPLAMAAGLATLTQLKPEHYEEFDRKANRLSEGYLAAAAKYNIPLTTNRAGAMFGVFFTDQPVTNFEQAKSSNLDMFRSYYQKMAARGVFLPPSQFEGLFLSTVHTDDDIEQTLAAVELTFKELQLEFNR.

Lys-271 carries the N6-(pyridoxal phosphate)lysine modification.

It belongs to the class-III pyridoxal-phosphate-dependent aminotransferase family. HemL subfamily. As to quaternary structure, homodimer. It depends on pyridoxal 5'-phosphate as a cofactor.

It is found in the cytoplasm. It catalyses the reaction (S)-4-amino-5-oxopentanoate = 5-aminolevulinate. It functions in the pathway porphyrin-containing compound metabolism; protoporphyrin-IX biosynthesis; 5-aminolevulinate from L-glutamyl-tRNA(Glu): step 2/2. The sequence is that of Glutamate-1-semialdehyde 2,1-aminomutase 2 from Exiguobacterium sibiricum (strain DSM 17290 / CCUG 55495 / CIP 109462 / JCM 13490 / 255-15).